Here is a 1380-residue protein sequence, read N- to C-terminus: DNA-directed RNA polymerase subunit beta (1380 aa).

The protein belongs to the RNA polymerase beta chain family. In terms of assembly, the RNAP catalytic core consists of 2 alpha, 1 beta, 1 beta' and 1 omega subunit. When a sigma factor is associated with the core the holoenzyme is formed, which can initiate transcription.

The enzyme catalyses RNA(n) + a ribonucleoside 5'-triphosphate = RNA(n+1) + diphosphate. In terms of biological role, DNA-dependent RNA polymerase catalyzes the transcription of DNA into RNA using the four ribonucleoside triphosphates as substrates. The polypeptide is DNA-directed RNA polymerase subunit beta (Rhizobium rhizogenes (strain K84 / ATCC BAA-868) (Agrobacterium radiobacter)).